The chain runs to 565 residues: Proline--tRNA ligase (565 aa).

Belongs to the class-II aminoacyl-tRNA synthetase family. ProS type 1 subfamily. Homodimer.

Its subcellular location is the cytoplasm. The catalysed reaction is tRNA(Pro) + L-proline + ATP = L-prolyl-tRNA(Pro) + AMP + diphosphate. Functionally, catalyzes the attachment of proline to tRNA(Pro) in a two-step reaction: proline is first activated by ATP to form Pro-AMP and then transferred to the acceptor end of tRNA(Pro). As ProRS can inadvertently accommodate and process non-cognate amino acids such as alanine and cysteine, to avoid such errors it has two additional distinct editing activities against alanine. One activity is designated as 'pretransfer' editing and involves the tRNA(Pro)-independent hydrolysis of activated Ala-AMP. The other activity is designated 'posttransfer' editing and involves deacylation of mischarged Ala-tRNA(Pro). The misacylated Cys-tRNA(Pro) is not edited by ProRS. This Lactobacillus acidophilus (strain ATCC 700396 / NCK56 / N2 / NCFM) protein is Proline--tRNA ligase.